The primary structure comprises 159 residues: Protein US8.5 (159 aa).

The disordered stretch occupies residues 27–107 (SSQPLDPEGP…APSPHPRPPG (81 aa)). Basic and acidic residues predominate over residues 80-91 (SDERGPPRHDRP).

This sequence belongs to the HHV-1 US8.5 protein family. In terms of processing, phosphorylated.

Its subcellular location is the host nucleus. The protein localises to the host nucleolus. This chain is Protein US8.5, found in Human herpesvirus 1 (strain 17) (HHV-1).